Reading from the N-terminus, the 248-residue chain is Serine/arginine-rich splicing factor 1 (248 aa).

Ser2 bears the N-acetylserine mark. Phosphoserine is present on Ser2. One can recognise an RRM 1 domain in the interval 16-91 (CRIYVGNLPP…YRLRVEFPRS (76 aa)). Residue Lys30 forms a Glycyl lysine isopeptide (Lys-Gly) (interchain with G-Cter in SUMO2) linkage. Lys38 carries the N6-acetyllysine; alternate modification. Residue Lys38 forms a Glycyl lysine isopeptide (Lys-Gly) (interchain with G-Cter in SUMO2); alternate linkage. The disordered stretch occupies residues 88-134 (FPRSGRGTGRGGGGGGGGGAPRGRYGPPSRRSENRVVVSGLPPSGSW). Arg93, Arg97, and Arg109 each carry asymmetric dimethylarginine; alternate. 3 positions are modified to omega-N-methylarginine; alternate: Arg93, Arg97, and Arg109. The span at 93-108 (RGTGRGGGGGGGGGAP) shows a compositional bias: gly residues. Arg111 bears the Omega-N-methylarginine mark. The RRM 2 domain occupies 121 to 195 (NRVVVSGLPP…ETAYIRVKVD (75 aa)). Ser133 is modified (phosphoserine). N6-acetyllysine is present on Lys179. The interval 191 to 248 (RVKVDGPRSPSYGRSRSRSRSRSRSRSRSNSRSRSYSPRRSRGSPRYSPRHSRSRSRT) is disordered. The interval 198–247 (RSPSYGRSRSRSRSRSRSRSRSNSRSRSYSPRRSRGSPRYSPRHSRSRSR) is interaction with SAFB1. A phosphoserine mark is found at Ser199 and Ser201. Tyr202 carries the post-translational modification Phosphotyrosine. A phosphoserine mark is found at Ser205, Ser207, Ser209, Ser231, Ser234, and Ser238. The segment covering 205 to 248 (SRSRSRSRSRSRSRSNSRSRSYSPRRSRGSPRYSPRHSRSRSRT) has biased composition (basic residues).

Belongs to the splicing factor SR family. As to quaternary structure, consists of two polypeptides of p32 and p33. Identified in the spliceosome C complex. Component of a ribonucleoprotein complex containing mRNAs and RNA-binding proteins including DDX5, HNRNPH2 and SRSF1 as well as splicing regulator ARVCF. In vitro, self-associates and binds SRSF2, SNRNP70 and U2AF1 but not U2AF2. Binds SREK1/SFRS12. Interacts with SAFB/SAFB1. Interacts with PSIP1/LEDGF. Interacts with RSRC1 (via Arg/Ser-rich domain). Interacts with ZRSR2/U2AF1-RS2. Interacts with CCDC55 (via C-terminus). Interacts with SRPK1 and a sliding docking interaction is essential for its sequential and processive phosphorylation by SRPK1. Interacts with NXF1. Interacts with CCNL1, CCNL2 and CDK11B. Interacts with RRP1B. Interacts (when phosphorylated in its RS domain) with TNPO3; promoting nuclear import. Interacts with ILDR1 (via C-terminus) and ILDR2. In terms of processing, phosphorylated by CLK1, CLK2, CLK3 and CLK4. Phosphorylated by SRPK1 at multiple serines in its RS domain via a directional (C-terminal to N-terminal) and a dual-track mechanism incorporating both processive phosphorylation (in which the kinase stays attached to the substrate after each round of phosphorylation) and distributive phosphorylation steps (in which the kinase and substrate dissociate after each phosphorylation event). The RS domain of SRSF1 binds to a docking groove in the large lobe of the kinase domain of SRPK1 and this induces certain structural changes in SRPK1 and/or RRM 2 domain of SRSF1, allowing RRM 2 to bind the kinase and initiate phosphorylation. The cycles continue for several phosphorylation steps in a processive manner (steps 1-8) until the last few phosphorylation steps (approximately steps 9-12). During that time, a mechanical stress induces the unfolding of the beta-4 motif in RRM 2, which then docks at the docking groove of SRPK1. This also signals RRM 2 to begin to dissociate, which facilitates SRSF1 dissociation after phosphorylation is completed. Asymmetrically dimethylated at arginines, probably by PRMT1, methylation promotes localization to nuclear speckles.

The protein localises to the cytoplasm. It is found in the nucleus speckle. Its function is as follows. Plays a role in preventing exon skipping, ensuring the accuracy of splicing and regulating alternative splicing. Interacts with other spliceosomal components, via the RS domains, to form a bridge between the 5'- and 3'-splice site binding components, U1 snRNP and U2AF. Can stimulate binding of U1 snRNP to a 5'-splice site-containing pre-mRNA. Binds to purine-rich RNA sequences, either the octamer, 5'-RGAAGAAC-3' (r=A or G) or the decamers, AGGACAGAGC/AGGACGAAGC. Binds preferentially to the 5'-CGAGGCG-3' motif in vitro. Three copies of the octamer constitute a powerful splicing enhancer in vitro, the ASF/SF2 splicing enhancer (ASE) which can specifically activate ASE-dependent splicing. May function as export adapter involved in mRNA nuclear export through the TAP/NXF1 pathway. The chain is Serine/arginine-rich splicing factor 1 (SRSF1) from Bos taurus (Bovine).